The following is a 392-amino-acid chain: Cytochrome b (392 aa).

The next 4 helical transmembrane spans lie at 38–58 (FGSLAGICLVIQIVTGVFLAM), 82–104 (WLLRYMHANGASMFLIVVHLHIF), 119–139 (VRCLGVVIFLLMIVTAFTGYV), and 185–205 (FFSLHHLLPFILVGASLLHLA). H88 and H102 together coordinate heme b. H189 and H203 together coordinate heme b. H208 serves as a coordination point for a ubiquinone. The next 4 membrane-spanning stretches (helical) occupy residues 231 to 251 (FYVKDLVGWVAFAIFFSIWIF), 295 to 315 (SGGVAAIAPVFICLLALPFFK), 327 to 347 (IHQGIFWLLLADRLLLGWIGC), and 354 to 373 (FVTIGQIPPFVFFLFFAITP).

It belongs to the cytochrome b family. As to quaternary structure, the main subunits of complex b-c1 are: cytochrome b, cytochrome c1 and the Rieske protein. It depends on heme b as a cofactor.

It is found in the mitochondrion inner membrane. Component of the ubiquinol-cytochrome c reductase complex (complex III or cytochrome b-c1 complex) that is part of the mitochondrial respiratory chain. The b-c1 complex mediates electron transfer from ubiquinol to cytochrome c. Contributes to the generation of a proton gradient across the mitochondrial membrane that is then used for ATP synthesis. This Pisum sativum (Garden pea) protein is Cytochrome b (MT-CYB).